The chain runs to 441 residues: Glutamate-1-semialdehyde 2,1-aminomutase (441 aa).

K276 carries the post-translational modification N6-(pyridoxal phosphate)lysine.

It belongs to the class-III pyridoxal-phosphate-dependent aminotransferase family. HemL subfamily. In terms of assembly, homodimer. The cofactor is pyridoxal 5'-phosphate.

The protein resides in the cytoplasm. The enzyme catalyses (S)-4-amino-5-oxopentanoate = 5-aminolevulinate. It participates in porphyrin-containing compound metabolism; protoporphyrin-IX biosynthesis; 5-aminolevulinate from L-glutamyl-tRNA(Glu): step 2/2. This is Glutamate-1-semialdehyde 2,1-aminomutase from Rhodococcus jostii (strain RHA1).